The primary structure comprises 691 residues: Elongation factor G (691 aa).

In terms of domain architecture, tr-type G spans 8-282 (ERVRNIGIAA…AVVNYLPAPV (275 aa)). GTP contacts are provided by residues 17–24 (AHIDAGKT), 81–85 (DTPGH), and 135–138 (NKMD).

The protein belongs to the TRAFAC class translation factor GTPase superfamily. Classic translation factor GTPase family. EF-G/EF-2 subfamily.

It is found in the cytoplasm. In terms of biological role, catalyzes the GTP-dependent ribosomal translocation step during translation elongation. During this step, the ribosome changes from the pre-translocational (PRE) to the post-translocational (POST) state as the newly formed A-site-bound peptidyl-tRNA and P-site-bound deacylated tRNA move to the P and E sites, respectively. Catalyzes the coordinated movement of the two tRNA molecules, the mRNA and conformational changes in the ribosome. The chain is Elongation factor G from Prochlorococcus marinus (strain NATL2A).